The chain runs to 310 residues: Glutaminase (310 aa).

Positions 67, 118, 161, 168, 192, 244, and 262 each coordinate substrate.

The protein belongs to the glutaminase family. Homotetramer.

The catalysed reaction is L-glutamine + H2O = L-glutamate + NH4(+). The sequence is that of Glutaminase from Legionella pneumophila subsp. pneumophila (strain Philadelphia 1 / ATCC 33152 / DSM 7513).